The following is a 91-amino-acid chain: UPF0250 protein HCH_05838 (91 aa).

This sequence belongs to the UPF0250 family.

The sequence is that of UPF0250 protein HCH_05838 from Hahella chejuensis (strain KCTC 2396).